The primary structure comprises 101 residues: MLTLTHYLVLAAVMFAISVLGIFLNRKNVIVLLMAIELMLLAVNFNFIAFAHYFGDTAGQIFVFFVLTVAAAESAIGLAILVVLFRNLATINVEDLGQLKG.

The next 3 helical transmembrane spans lie at 4-24 (LTHY…GIFL), 30-50 (IVLL…FIAF), and 61-81 (IFVF…LAIL).

This sequence belongs to the complex I subunit 4L family. NDH-1 is composed of 14 different subunits. Subunits NuoA, H, J, K, L, M, N constitute the membrane sector of the complex.

It localises to the cell inner membrane. The catalysed reaction is a quinone + NADH + 5 H(+)(in) = a quinol + NAD(+) + 4 H(+)(out). Its function is as follows. NDH-1 shuttles electrons from NADH, via FMN and iron-sulfur (Fe-S) centers, to quinones in the respiratory chain. The immediate electron acceptor for the enzyme in this species is believed to be ubiquinone. Couples the redox reaction to proton translocation (for every two electrons transferred, four hydrogen ions are translocated across the cytoplasmic membrane), and thus conserves the redox energy in a proton gradient. The chain is NADH-quinone oxidoreductase subunit K from Laribacter hongkongensis (strain HLHK9).